A 407-amino-acid chain; its full sequence is MAVAIKKEKTKFAPVKEVLSEKDHANYTKFQDTSKLEWFCRTSNHKKFKSHSLLKAVRNPTETRIETQTLYFTDLTNGKCGLIQLLYSSVMGGIYKGFQLNFKIFKASSEENSEEDIDIWESFKIDNIKDFDTLKVESDNVTFHFVPLENSSSSGFAQLLIKIDIPKGSTSCLLKDLKVDITVNLQEGFIINPDGSNYYLDKSISLEELAKRDSSSTSRKMIRHVFVPRGFCNGTISYKKNDKPVKLDLKDTPMLYLDAVQGLIPNKAASKWNFLCFNGEKRSMMCIEFTTTKEYGSTTVTIWAVSDKDKILEVGSSVNDHAVKFPSTKEDKQNGWKYPTSISFPRGFEESNLRLVNRYDIMSELPAFIRSIAENLANMKPFIYQFCQKSKFDDDEGVSIIESTFIN.

K22 is covalently cross-linked (Glycyl lysine isopeptide (Lys-Gly) (interchain with G-Cter in ubiquitin)).

This sequence belongs to the SVF1 family.

The protein resides in the cytoplasm. This is an uncharacterized protein from Saccharomyces cerevisiae (strain ATCC 204508 / S288c) (Baker's yeast).